Reading from the N-terminus, the 117-residue chain is MSRQSAFKFQNGNRHERACLSDVHKILIIILYSTKGKRELGKRITHFMYIHIFCTYLYQASIVQYCSSTLLNVIAFSWYPLNLIYKYEYILRSKLILMVCLDFARSGGVLDSGDVSL.

This is an uncharacterized protein from Saccharomyces cerevisiae (strain ATCC 204508 / S288c) (Baker's yeast).